We begin with the raw amino-acid sequence, 247 residues long: Osmotin-like protein OSML81 (247 aa).

The first 21 residues, 1–21 (MGYLRSSFIFSLLAFVTYTYA), serve as a signal peptide directing secretion. Intrachain disulfides connect Cys30–Cys225, Cys72–Cys82, Cys87–Cys93, Cys141–Cys213, Cys146–Cys196, Cys154–Cys164, Cys168–Cys177, and Cys178–Cys183.

Belongs to the thaumatin family.

The protein is Osmotin-like protein OSML81 of Solanum commersonii (Commerson's wild potato).